A 492-amino-acid polypeptide reads, in one-letter code: Bifunctional purine biosynthesis protein PurH (492 aa).

The region spanning 1–144 (MKKAILSVSN…KNYKHVTTIV (144 aa)) is the MGS-like domain.

The protein belongs to the PurH family.

The catalysed reaction is (6R)-10-formyltetrahydrofolate + 5-amino-1-(5-phospho-beta-D-ribosyl)imidazole-4-carboxamide = 5-formamido-1-(5-phospho-D-ribosyl)imidazole-4-carboxamide + (6S)-5,6,7,8-tetrahydrofolate. The enzyme catalyses IMP + H2O = 5-formamido-1-(5-phospho-D-ribosyl)imidazole-4-carboxamide. The protein operates within purine metabolism; IMP biosynthesis via de novo pathway; 5-formamido-1-(5-phospho-D-ribosyl)imidazole-4-carboxamide from 5-amino-1-(5-phospho-D-ribosyl)imidazole-4-carboxamide (10-formyl THF route): step 1/1. It participates in purine metabolism; IMP biosynthesis via de novo pathway; IMP from 5-formamido-1-(5-phospho-D-ribosyl)imidazole-4-carboxamide: step 1/1. The protein is Bifunctional purine biosynthesis protein PurH of Staphylococcus aureus (strain JH1).